The primary structure comprises 193 residues: Adenine phosphoribosyltransferase (193 aa).

Belongs to the purine/pyrimidine phosphoribosyltransferase family. Homodimer.

It is found in the cytoplasm. It catalyses the reaction AMP + diphosphate = 5-phospho-alpha-D-ribose 1-diphosphate + adenine. It functions in the pathway purine metabolism; AMP biosynthesis via salvage pathway; AMP from adenine: step 1/1. Catalyzes a salvage reaction resulting in the formation of AMP, that is energically less costly than de novo synthesis. This is Adenine phosphoribosyltransferase from Bifidobacterium longum (strain DJO10A).